Here is a 404-residue protein sequence, read N- to C-terminus: Putative transporter AmpG 2 (404 aa).

The next 12 helical transmembrane spans lie at 11–31 (IYNI…YLLT), 49–69 (IGLF…GPLL), 84–104 (YCLI…TGFN), 109–129 (FISF…YDML), 154–174 (FRIG…IISW), 177–197 (VYRT…FYPL), 224–244 (WLII…LAVM), 261–281 (LGYK…GGFL), 294–311 (VLVY…LYSY), 315–337 (ITTL…SPFF), 353–373 (IALI…ISGY), and 378–398 (LGWG…YILI).

This sequence belongs to the major facilitator superfamily.

The protein resides in the cell inner membrane. This is Putative transporter AmpG 2 (ampG2) from Rickettsia bellii (strain RML369-C).